A 191-amino-acid chain; its full sequence is dCTP deaminase, dUMP-forming (191 aa).

Residues 101–106, Asp119, 127–129, Gln148, Tyr162, and Gln174 each bind dCTP; these read KSSLGR and TLE. Catalysis depends on Glu129, which acts as the Proton donor/acceptor.

It belongs to the dCTP deaminase family. As to quaternary structure, homotrimer.

The enzyme catalyses dCTP + 2 H2O = dUMP + NH4(+) + diphosphate. The protein operates within pyrimidine metabolism; dUMP biosynthesis; dUMP from dCTP: step 1/1. Functionally, bifunctional enzyme that catalyzes both the deamination of dCTP to dUTP and the hydrolysis of dUTP to dUMP without releasing the toxic dUTP intermediate. The sequence is that of dCTP deaminase, dUMP-forming from Streptomyces coelicolor (strain ATCC BAA-471 / A3(2) / M145).